We begin with the raw amino-acid sequence, 333 residues long: Syntaxin-4 (333 aa).

Residues 1–312 are Cytoplasmic-facing; it reads MGKDRLPELL…QHQKKARKKK (312 aa). Residues 50-66 are compositionally biased toward low complexity; that stretch reads YSVVSQNSHSCSNNNSS. A disordered region spans residues 50 to 81; sequence YSVVSQNSHSCSNNNSSTEPKDRSSSKMTQYG. Residues 91–116 adopt a coiled-coil conformation; it reads YTEIRQQLAQIAANLETMNRMAQTVN. One can recognise a t-SNARE coiled-coil homology domain in the interval 239–301; the sequence is LREMMDRFNE…DKGADELDQA (63 aa). A helical; Anchor for type IV membrane protein membrane pass occupies residues 313–333; it reads IMLIVILAAVLLVLLLVGIYL.

It belongs to the syntaxin family.

It localises to the membrane. In terms of biological role, potentially involved in docking of synaptic vesicles at presynaptic active zones. This Drosophila melanogaster (Fruit fly) protein is Syntaxin-4.